Here is a 196-residue protein sequence, read N- to C-terminus: Small ribosomal subunit protein uS4c (196 aa).

The disordered stretch occupies residues 17–38; sequence ALPGLTRKTPKSRSNLKKKFHS. Positions 24 to 38 are enriched in basic residues; the sequence is KTPKSRSNLKKKFHS. Residues 89–169 form the S4 RNA-binding domain; sequence MRLDNILFRL…LPKHLTIDTL (81 aa).

The protein belongs to the universal ribosomal protein uS4 family. As to quaternary structure, part of the 30S ribosomal subunit. Contacts protein S5. The interaction surface between S4 and S5 is involved in control of translational fidelity.

Its subcellular location is the plastid. The protein localises to the chloroplast. Its function is as follows. One of the primary rRNA binding proteins, it binds directly to 16S rRNA where it nucleates assembly of the body of the 30S subunit. In terms of biological role, with S5 and S12 plays an important role in translational accuracy. The protein is Small ribosomal subunit protein uS4c (rps4) of Lygeum spartum.